The following is a 255-amino-acid chain: MTKVGIVGSTGRMGAHLIKNVLEEEGLELAALHVFDELTVDVPDEVLITNSMSEVLKACDVVIDFSAPVATQELCEEALKNPTALVIATTGFTAHQQNLLTEAAKEMPVLYSSNMSAGIALLKQLVEQVSATLKDFDIEIVEQHHRHKVDAPSGTALTLGEFAAKGRGLDLDDVRVSGRDGQIGARTKDEIAVMALRGGDIVGRHTVGFYNDGEFLELNHTATSRETFSKGAIRAAKWLVDQKNGLYSINDCLGI.

Residues 8–13, 88–90, and 112–115 each bind NAD(+); these read GSTGRM, ATT, and SSNM. His144 serves as the catalytic Proton donor/acceptor. Position 145 (His145) interacts with (S)-2,3,4,5-tetrahydrodipicolinate. The Proton donor role is filled by Lys148. 154–155 serves as a coordination point for (S)-2,3,4,5-tetrahydrodipicolinate; that stretch reads GT.

This sequence belongs to the DapB family.

It is found in the cytoplasm. It catalyses the reaction (S)-2,3,4,5-tetrahydrodipicolinate + NAD(+) + H2O = (2S,4S)-4-hydroxy-2,3,4,5-tetrahydrodipicolinate + NADH + H(+). The enzyme catalyses (S)-2,3,4,5-tetrahydrodipicolinate + NADP(+) + H2O = (2S,4S)-4-hydroxy-2,3,4,5-tetrahydrodipicolinate + NADPH + H(+). It participates in amino-acid biosynthesis; L-lysine biosynthesis via DAP pathway; (S)-tetrahydrodipicolinate from L-aspartate: step 4/4. Its function is as follows. Catalyzes the conversion of 4-hydroxy-tetrahydrodipicolinate (HTPA) to tetrahydrodipicolinate. This Sulfurovum sp. (strain NBC37-1) protein is 4-hydroxy-tetrahydrodipicolinate reductase.